The sequence spans 245 residues: Dehydrogenase/reductase SDR family member 6 (245 aa).

NAD(+) is bound by residues 16–18 (QGI), D37, and D58. Residue R144 coordinates substrate. The active-site Proton acceptor is the Y147. NAD(+) is bound by residues K151 and 180–184 (VDTPS). Positions 188 and 205 each coordinate substrate.

It belongs to the short-chain dehydrogenases/reductases (SDR) family. As to quaternary structure, homotetramer.

It localises to the cytoplasm. The enzyme catalyses cis-4-hydroxy-L-proline + NAD(+) = 4-oxo-L-proline + NADH + H(+). It catalyses the reaction (R)-3-hydroxybutanoate + NAD(+) = acetoacetate + NADH + H(+). It participates in amino-acid metabolism. It functions in the pathway siderophore biosynthesis. In terms of biological role, NAD(H)-dependent dehydrogenase/reductase with a preference for cyclic substrates. Catalyzes stereoselective conversion of 4-oxo-L-proline to cis-4-hydroxy-L-proline, likely a detoxification mechanism for ketoprolines. Mediates the formation of 2,5-dihydroxybenzoate (2,5-DHBA), a siderophore that chelates free cytoplasmic iron and associates with LCN2, thereby regulating iron transport and homeostasis while protecting cells against free radical-induced oxidative stress. The iron-siderophore complex is imported into mitochondria, providing an iron source for mitochondrial metabolic processes in particular heme synthesis. May act as a 3-hydroxybutyrate dehydrogenase. The protein is Dehydrogenase/reductase SDR family member 6 (BDH2) of Bos taurus (Bovine).